Reading from the N-terminus, the 486-residue chain is Protein nucleotidyltransferase YdiU (486 aa).

8 residues coordinate ATP: Gly-90, Gly-92, Arg-93, Lys-113, Asp-125, Gly-126, Arg-176, and Arg-183. Asp-252 acts as the Proton acceptor in catalysis. Mg(2+)-binding residues include Asn-253 and Asp-262. An ATP-binding site is contributed by Asp-262.

Belongs to the SELO family. Mg(2+) serves as cofactor. It depends on Mn(2+) as a cofactor.

It catalyses the reaction L-seryl-[protein] + ATP = 3-O-(5'-adenylyl)-L-seryl-[protein] + diphosphate. It carries out the reaction L-threonyl-[protein] + ATP = 3-O-(5'-adenylyl)-L-threonyl-[protein] + diphosphate. The enzyme catalyses L-tyrosyl-[protein] + ATP = O-(5'-adenylyl)-L-tyrosyl-[protein] + diphosphate. The catalysed reaction is L-histidyl-[protein] + UTP = N(tele)-(5'-uridylyl)-L-histidyl-[protein] + diphosphate. It catalyses the reaction L-seryl-[protein] + UTP = O-(5'-uridylyl)-L-seryl-[protein] + diphosphate. It carries out the reaction L-tyrosyl-[protein] + UTP = O-(5'-uridylyl)-L-tyrosyl-[protein] + diphosphate. Functionally, nucleotidyltransferase involved in the post-translational modification of proteins. It can catalyze the addition of adenosine monophosphate (AMP) or uridine monophosphate (UMP) to a protein, resulting in modifications known as AMPylation and UMPylation. The sequence is that of Protein nucleotidyltransferase YdiU from Pseudomonas entomophila (strain L48).